The sequence spans 20 residues: Unknown protein NF042 from 2D-PAGE (20 aa).

This Naegleria fowleri (Brain eating amoeba) protein is Unknown protein NF042 from 2D-PAGE.